The following is a 287-amino-acid chain: Nucleotide-binding protein MXAN_6564 (287 aa).

13–20 (GMSGSGKS) provides a ligand contact to ATP. 62-65 (DVRE) provides a ligand contact to GTP.

Belongs to the RapZ-like family.

In terms of biological role, displays ATPase and GTPase activities. The protein is Nucleotide-binding protein MXAN_6564 of Myxococcus xanthus (strain DK1622).